The primary structure comprises 474 residues: Trehalose-6-phosphate synthase (474 aa).

R10 contacts D-glucose 6-phosphate. 22–23 (GG) lines the UDP-alpha-D-glucose pocket. Positions 77 and 131 each coordinate D-glucose 6-phosphate. Residues R263 and K268 each coordinate UDP-alpha-D-glucose. R301 contacts D-glucose 6-phosphate. UDP-alpha-D-glucose-binding positions include F340 and 366–370 (LVAKE).

The protein belongs to the glycosyltransferase 20 family. As to quaternary structure, homotetramer.

It catalyses the reaction D-glucose 6-phosphate + UDP-alpha-D-glucose = alpha,alpha-trehalose 6-phosphate + UDP + H(+). It functions in the pathway glycan biosynthesis; trehalose biosynthesis. Functionally, probably involved in the osmoprotection via the biosynthesis of trehalose. Catalyzes the transfer of glucose from UDP-alpha-D-glucose (UDP-Glc) to D-glucose 6-phosphate (Glc-6-P) to form trehalose-6-phosphate. Acts with retention of the anomeric configuration of the UDP-sugar donor. This Escherichia coli O6:K15:H31 (strain 536 / UPEC) protein is Trehalose-6-phosphate synthase.